The chain runs to 229 residues: Small ribosomal subunit protein uS3 (229 aa).

Residues 39–109 (MRKYIKEQLM…QVNIDIVEIR (71 aa)) form the KH type-2 domain. The disordered stretch occupies residues 210–229 (VVSQQNSRPSGPRGPRRPRA).

Belongs to the universal ribosomal protein uS3 family. In terms of assembly, part of the 30S ribosomal subunit. Forms a tight complex with proteins S10 and S14.

In terms of biological role, binds the lower part of the 30S subunit head. Binds mRNA in the 70S ribosome, positioning it for translation. This is Small ribosomal subunit protein uS3 from Akkermansia muciniphila (strain ATCC BAA-835 / DSM 22959 / JCM 33894 / BCRC 81048 / CCUG 64013 / CIP 107961 / Muc).